The sequence spans 437 residues: Transcriptional modulator WTM1 (437 aa).

The stretch at 103-144 is one WD 1 repeat; sequence YQGETVSKMAYLDKTGETTLLSMSKNGSLAWFKEGIKVPIHI. The residue at position 187 (threonine 187) is a Phosphothreonine. A Phosphoserine modification is found at serine 200. WD repeat units lie at residues 221 to 259, 264 to 304, and 326 to 366; these read PGTTVTHTVRFFDNHIFASCSDDNILRFWDTRTSDKPIW, PKNG…AATT, and AGGD…SKYN. The segment at 368–404 is disordered; the sequence is DDTIAPPQDATEESQTKSLRFLHKGGSRRSPKQIGRR. Threonine 370 carries the phosphothreonine modification. The span at 387-402 shows a compositional bias: basic residues; sequence RFLHKGGSRRSPKQIG. Threonine 406 carries the phosphothreonine modification.

Interacts with KAP122.

It is found in the cytoplasm. It localises to the nucleus. Functionally, transcriptional modulator with roles in meiotic regulation and silencing. Acts either as an adapter to facilitate nuclear import by KAP122 of the RNR2-RNR4 heterodimer, also called beta-beta' subunit, which corresponds to the small subunit of the ribonucleotide reductase (RNR); or as an anchor to retain RNR2-RNR4 in the nucleus. The sequence is that of Transcriptional modulator WTM1 (WTM1) from Saccharomyces cerevisiae (strain ATCC 204508 / S288c) (Baker's yeast).